The primary structure comprises 713 residues: Low-density lipoprotein receptor-related protein 10 (713 aa).

The signal sequence occupies residues 1-16 (MLLATLLLLLLGGALA). The Extracellular segment spans residues 17-440 (HPDRIIFPNH…WDCSYVLPRK (424 aa)). 2 disulfide bridges follow: Cys-28–Cys-57 and Cys-80–Cys-98. Residues 28-136 (CEDPPAVLLE…QGFLLSYSQD (109 aa)) enclose the CUB 1 domain. An N-linked (GlcNAc...) asparagine glycan is attached at Asn-56. An N-linked (GlcNAc...) asparagine glycan is attached at Asn-111. The region spanning 139 to 175 (MCLQEEFQCLNHRCVSAVQRCDGVDACGDGSDEAGCS) is the LDL-receptor class A 1 domain. Cystine bridges form between Cys-140/Cys-152, Cys-147/Cys-165, Cys-159/Cys-174, and Cys-192/Cys-220. Residues 192–305 (CNVTLEDFYG…RGFNATYHVR (114 aa)) form the CUB 2 domain. 2 N-linked (GlcNAc...) asparagine glycosylation sites follow: Asn-193 and Asn-299. LDL-receptor class A domains follow at residues 307 to 354 (YCLP…EDCP), 355 to 397 (GCPP…RRCR), and 398 to 434 (HCQPGNFRCRDEKCVYETWVCDGQPDCADGSDEWDCS). Intrachain disulfides connect Cys-308–Cys-331, Cys-315–Cys-344, Cys-338–Cys-353, Cys-356–Cys-374, Cys-363–Cys-387, Cys-381–Cys-396, Cys-399–Cys-411, Cys-406–Cys-424, and Cys-418–Cys-433. A helical membrane pass occupies residues 441–461 (VITAAVIGSLVCGLLLVIALG). The Cytoplasmic portion of the chain corresponds to 462–713 (CTCKLYAIRT…AEAEDEPLLT (252 aa)). Residues 564 to 637 (GLLPRTNTPA…SPAPTTVPEA (74 aa)) form a disordered region. A compositionally biased stretch (polar residues) spans 569-584 (TNTPARASEARSQVTP). Thr-596 is modified (phosphothreonine). A compositionally biased stretch (low complexity) spans 621-636 (PLPSASTSPAPTTVPE).

This sequence belongs to the LDLR family. In terms of tissue distribution, expressed in blood leukocyte, lung, placenta, small intestine, liver, kidney, spleen, thymus, colon, skeletal muscle and heart.

The protein localises to the membrane. It is found in the coated pit. Functionally, probable receptor, which is involved in the internalization of lipophilic molecules and/or signal transduction. May be involved in the uptake of lipoprotein APOE in liver. In Homo sapiens (Human), this protein is Low-density lipoprotein receptor-related protein 10 (LRP10).